We begin with the raw amino-acid sequence, 440 residues long: 3-phosphoshikimate 1-carboxyvinyltransferase (440 aa).

Residues Lys26, Ser27, and Arg31 each contribute to the 3-phosphoshikimate site. Position 26 (Lys26) interacts with phosphoenolpyruvate. Phosphoenolpyruvate contacts are provided by Gly100 and Arg134. 3-phosphoshikimate is bound by residues Ser180, Ser181, Gln182, Ser208, Asp323, Asn346, and Lys350. Residue Gln182 coordinates phosphoenolpyruvate. Catalysis depends on Asp323, which acts as the Proton acceptor. 3 residues coordinate phosphoenolpyruvate: Arg354, Arg398, and Lys423.

It belongs to the EPSP synthase family. As to quaternary structure, monomer.

The protein localises to the cytoplasm. The enzyme catalyses 3-phosphoshikimate + phosphoenolpyruvate = 5-O-(1-carboxyvinyl)-3-phosphoshikimate + phosphate. It functions in the pathway metabolic intermediate biosynthesis; chorismate biosynthesis; chorismate from D-erythrose 4-phosphate and phosphoenolpyruvate: step 6/7. Catalyzes the transfer of the enolpyruvyl moiety of phosphoenolpyruvate (PEP) to the 5-hydroxyl of shikimate-3-phosphate (S3P) to produce enolpyruvyl shikimate-3-phosphate and inorganic phosphate. The polypeptide is 3-phosphoshikimate 1-carboxyvinyltransferase (Pasteurella multocida (strain Pm70)).